Consider the following 484-residue polypeptide: 6-phosphogluconate dehydrogenase, decarboxylating (484 aa).

NADP(+)-binding positions include 11-16 (GLAVMG), 34-36 (NRT), 76-78 (VRA), and Asn-104. Substrate-binding positions include Asn-104 and 130–132 (SGG). Lys-185 acts as the Proton acceptor in catalysis. 188-189 (HN) serves as a coordination point for substrate. Glu-192 (proton donor) is an active-site residue. 5 residues coordinate substrate: Tyr-193, Lys-262, Arg-289, Arg-447, and His-453.

The protein belongs to the 6-phosphogluconate dehydrogenase family. As to quaternary structure, homodimer.

It carries out the reaction 6-phospho-D-gluconate + NADP(+) = D-ribulose 5-phosphate + CO2 + NADPH. Its pathway is carbohydrate degradation; pentose phosphate pathway; D-ribulose 5-phosphate from D-glucose 6-phosphate (oxidative stage): step 3/3. Its function is as follows. Catalyzes the oxidative decarboxylation of 6-phosphogluconate to ribulose 5-phosphate and CO(2), with concomitant reduction of NADP to NADPH. The chain is 6-phosphogluconate dehydrogenase, decarboxylating (gnd) from Haemophilus ducreyi (strain 35000HP / ATCC 700724).